A 118-amino-acid chain; its full sequence is Small ribosomal subunit protein uS13 (118 aa).

The segment at 94–118 (SLPLRGQRTKTNARTRKGPRKPIKR) is disordered.

It belongs to the universal ribosomal protein uS13 family. Part of the 30S ribosomal subunit. Forms a loose heterodimer with protein S19. Forms two bridges to the 50S subunit in the 70S ribosome.

Its function is as follows. Located at the top of the head of the 30S subunit, it contacts several helices of the 16S rRNA. In the 70S ribosome it contacts the 23S rRNA (bridge B1a) and protein L5 of the 50S subunit (bridge B1b), connecting the 2 subunits; these bridges are implicated in subunit movement. Contacts the tRNAs in the A and P-sites. The chain is Small ribosomal subunit protein uS13 from Photobacterium profundum (strain SS9).